The following is a 178-amino-acid chain: Large ribosomal subunit protein uL6 (178 aa).

It belongs to the universal ribosomal protein uL6 family. Part of the 50S ribosomal subunit.

Functionally, this protein binds to the 23S rRNA, and is important in its secondary structure. It is located near the subunit interface in the base of the L7/L12 stalk, and near the tRNA binding site of the peptidyltransferase center. The sequence is that of Large ribosomal subunit protein uL6 from Symbiobacterium thermophilum (strain DSM 24528 / JCM 14929 / IAM 14863 / T).